The primary structure comprises 72 residues: uncharacterized protein (72 aa).

This is an uncharacterized protein from Bacillus subtilis (strain 168).